Reading from the N-terminus, the 506-residue chain is Sucrose transport protein SUT3 (506 aa).

At 1 to 20 (MAVDMELDGGGDGKGKAPPQ) the chain is on the cytoplasmic side. A helical transmembrane segment spans residues 21–41 (ISLSGLFLACMVAGGVQYGWA). The Extracellular segment spans residues 42 to 54 (LQLSLLTPYVQTL). The helical transmembrane segment at 55–75 (GIPHALTSVMWLCGPIAGLIV) threads the bilayer. Residues 76 to 94 (QPCVGLYSDKCTSSLGRRR) lie on the Cytoplasmic side of the membrane. Residues 95-115 (PFILTGCIIICISVIVIGFSS) form a helical membrane-spanning segment. Over 116–135 (DIGYALGDTTEDCKVYRGPR) the chain is Extracellular. The helical transmembrane segment at 136–156 (YHAAAAFILGFWLLDFSNNTV) threads the bilayer. The Cytoplasmic segment spans residues 157–171 (QGPARALMADLSGRH). Residues 172–192 (GPSAANAIFCSWMALGNILGY) traverse the membrane as a helical segment. The Extracellular segment spans residues 193-220 (SSGSTNDWHKWFPFLMTRACCEACANLK). A helical membrane pass occupies residues 221 to 241 (AAFLVAVVFLGLSTAVTMVFA). Topologically, residues 242–275 (REVALDPVAAAKRNEGEASGLLAVFKGMKNLPVG) are cytoplasmic. The chain crosses the membrane as a helical span at residues 276 to 296 (MPSVLIVTGLTWLSWFPFILF). At 297–327 (DTDWMGREIYHGRPDGSPAEVTAFQEGVRQG) the chain is on the extracellular side. Residues 328–348 (AFGLLLNSIVLGISSFLIEPM) traverse the membrane as a helical segment. Residues 349–355 (CRRLGAR) are Cytoplasmic-facing. Residues 356–376 (AVWVMSSAVVCVAMAAVSVLS) form a helical membrane-spanning segment. Over 377-404 (AWSLGDFGGSVQDAARAPAEEGGVRASA) the chain is Extracellular. Residues 405-425 (LALFVFLGLPFAVLCSVPFAV) traverse the membrane as a helical segment. At 426 to 441 (TAQLAASRGGGQGLCT) the chain is on the cytoplasmic side. A helical transmembrane segment spans residues 442–462 (GVLNISIVVPQMAIALGAGPW). Topologically, residues 463-470 (DELFGEGN) are extracellular. Residues 471-491 (IPAFAMASVFAAAAAAAGVVL) form a helical membrane-spanning segment. Residues 492–506 (LPKVSVRSVSMAGGH) are Cytoplasmic-facing.

The protein belongs to the glycoside-pentoside-hexuronide (GPH) cation symporter transporter (TC 2.A.2.4) family. In terms of assembly, homodimer. In terms of tissue distribution, widely expressed. Highest expression in sink leaves and lowest in germinating seeds.

It localises to the cell membrane. It participates in glycan biosynthesis; sucrose metabolism. Functionally, responsible for the transport of sucrose into the cell, with the concomitant uptake of protons (symport system). May also transport other glucosides. The chain is Sucrose transport protein SUT3 (SUT3) from Oryza sativa subsp. japonica (Rice).